Here is a 266-residue protein sequence, read N- to C-terminus: Metallo-beta-lactamase VIM-2 (266 aa).

The signal sequence occupies residues 1-20 (MFKLLSKLLVYLTASIMAIA). Positions 114, 116, and 198 each coordinate Zn(2+).

The protein belongs to the metallo-beta-lactamase superfamily. Class-B beta-lactamase family. In terms of assembly, monomer. The cofactor is Zn(2+).

It is found in the periplasm. The enzyme catalyses a beta-lactam + H2O = a substituted beta-amino acid. With respect to regulation, inhibited by chelating agents such as EDTA. Inhibited by a fungal natural product, aspergillomarasmine A (AMA). Inhibited by 2-triazolylthioacetamides. Class B beta-lactamase which confers resistance to the beta-lactam antibiotics, including penicillins, cephalosporins and carbapenems. Acts via hydrolysis of the beta-lactam ring. Has penicillin-, cephalosporin- and carbapenem-hydrolyzing activities. In Escherichia coli, this protein is Metallo-beta-lactamase VIM-2.